Here is a 440-residue protein sequence, read N- to C-terminus: MGSSHLLNKGLPLGIRPPIMNGPMHPRPLVALLDGRDCTVEMPILKDVATVAFCDAQSTQEIHEKVLNEAVGALMYHTITLTREDLEKFKALRIIVRIGSGFDNIDIKSAGDLGIAVCNVPAASVEETADSTMCHILNLYRRTTWLHQALREGTRVQSVEQIREVASGAARIRGETLGIIGLGRVGQAVALRAKTFGFNVFFYDPYLSDGIERALGLQRVSTLQDLLFHSDCVTLHCGLNEHNHHLINDFTIKQMRQGAFLVNTARGGLVDEKALAQALKEGRIRGAALDVHESEPFSFTQGPLKDAPNLICTPHAAWYSEQASIEMREEAAREIRRAITGRIPDSLKNCVNKDHLTAATHWASMDPGVVHPELNGGAYRYPQGVVSVAPAGLPAAVEGIVPSAMSLSHAHPAVAHPPHAPSPGQTIKPEADRDHPSDQL.

Residues Ser-100, 180 to 185 (IGLGRV), Asp-204, 237 to 243 (CGLNEHN), 264 to 266 (TAR), and Asp-290 contribute to the NAD(+) site. Residue Arg-266 is part of the active site. Glu-295 is a catalytic residue. The Proton donor role is filled by His-315. 315-318 (HAAW) contacts NAD(+). Residues 409–440 (HAHPAVAHPPHAPSPGQTIKPEADRDHPSDQL) form a disordered region. The span at 429 to 440 (PEADRDHPSDQL) shows a compositional bias: basic and acidic residues.

The protein belongs to the D-isomer specific 2-hydroxyacid dehydrogenase family. Requires NAD(+) as cofactor.

It localises to the nucleus. Corepressor targeting diverse transcription regulators. Has dehydrogenase activity. This Xenopus laevis (African clawed frog) protein is C-terminal-binding protein 1 (ctbp1).